Reading from the N-terminus, the 229-residue chain is MSQPRPLLSPPETEEQLLAQAQQLSGYTLGELAALVGLVTPENLKRDKGWIGVLLEIWLGASAGSKPEQDFAALGVELKTIPVDSLGRPLETTFVCVAPLTGNSGVTWETSHVRHKLKRVLWIPVEGERSIPLAQRRVGSPLLWSPNEEEDRQLREDWEELMDMIVLGQVERITARHGEYLQIRPKAANAKALTEAIGARGERILTLPRGFYLKKNFTSALLARHFLIQ.

The protein belongs to the MutH family.

Its subcellular location is the cytoplasm. Sequence-specific endonuclease that cleaves unmethylated GATC sequences. It is involved in DNA mismatch repair. The chain is DNA mismatch repair protein MutH from Escherichia coli (strain K12 / MC4100 / BW2952).